The sequence spans 449 residues: GTPase Der (449 aa).

EngA-type G domains lie at 4–174 and 183–358; these read PIVA…PPKT and LRIA…VQRQ. GTP is bound by residues 10–17, 57–61, 126–129, 189–196, 236–240, and 301–304; these read GRPNVGKS, DTAGV, NKCD, DTAGI, and NKWD. Residues 359 to 444 enclose the KH-like domain; that stretch reads KRVPTSELNN…PIVIVFRSRE (86 aa).

Belongs to the TRAFAC class TrmE-Era-EngA-EngB-Septin-like GTPase superfamily. EngA (Der) GTPase family. In terms of assembly, associates with the 50S ribosomal subunit.

In terms of biological role, GTPase that plays an essential role in the late steps of ribosome biogenesis. This chain is GTPase Der, found in Chloroflexus aurantiacus (strain ATCC 29366 / DSM 635 / J-10-fl).